A 466-amino-acid chain; its full sequence is IQ domain-containing protein C (466 aa).

One can recognise an IQ domain in the interval 6-35; the sequence is LVRKVSALQACVRGFLVRRQFQSLRAEYEA. Disordered stretches follow at residues 105–157, 214–233, 238–310, and 394–466; these read KSGE…PHSQ, EQACERDQSQPSAPLEDQSY, TGEL…QTFG, and VLDL…EPPG. The span at 132–153 shows a compositional bias: basic and acidic residues; sequence PSQEKTRDTTRMENPEATDQRL. A compositionally biased stretch (polar residues) spans 282–293; the sequence is GPPSSIPSNSQA. Over residues 297–306 the composition is skewed to basic and acidic residues; that stretch reads RLTKGPDDGR. S438 is subject to Phosphoserine.

This is IQ domain-containing protein C (IQCC) from Homo sapiens (Human).